A 298-amino-acid chain; its full sequence is Acetyl-coenzyme A carboxylase carboxyl transferase subunit beta (298 aa).

In terms of domain architecture, CoA carboxyltransferase N-terminal spans 25 to 295 (VWAKCANCGE…SADHREHVVA (271 aa)). Zn(2+) contacts are provided by Cys-29, Cys-32, Cys-48, and Cys-51. A C4-type zinc finger spans residues 29 to 51 (CANCGELTYQKQFNDALKVCPKC).

Belongs to the AccD/PCCB family. As to quaternary structure, acetyl-CoA carboxylase is a heterohexamer composed of biotin carboxyl carrier protein (AccB), biotin carboxylase (AccC) and two subunits each of ACCase subunit alpha (AccA) and ACCase subunit beta (AccD). Requires Zn(2+) as cofactor.

The protein localises to the cytoplasm. It carries out the reaction N(6)-carboxybiotinyl-L-lysyl-[protein] + acetyl-CoA = N(6)-biotinyl-L-lysyl-[protein] + malonyl-CoA. Its pathway is lipid metabolism; malonyl-CoA biosynthesis; malonyl-CoA from acetyl-CoA: step 1/1. Functionally, component of the acetyl coenzyme A carboxylase (ACC) complex. Biotin carboxylase (BC) catalyzes the carboxylation of biotin on its carrier protein (BCCP) and then the CO(2) group is transferred by the transcarboxylase to acetyl-CoA to form malonyl-CoA. This Herpetosiphon aurantiacus (strain ATCC 23779 / DSM 785 / 114-95) protein is Acetyl-coenzyme A carboxylase carboxyl transferase subunit beta.